Consider the following 141-residue polypeptide: Nucleoside diphosphate kinase (141 aa).

ATP is bound by residues Lys11, Phe59, Arg87, Thr93, Arg104, and Asn114. Catalysis depends on His117, which acts as the Pros-phosphohistidine intermediate.

Belongs to the NDK family. Mg(2+) serves as cofactor.

Its subcellular location is the cytoplasm. The enzyme catalyses a 2'-deoxyribonucleoside 5'-diphosphate + ATP = a 2'-deoxyribonucleoside 5'-triphosphate + ADP. It carries out the reaction a ribonucleoside 5'-diphosphate + ATP = a ribonucleoside 5'-triphosphate + ADP. Major role in the synthesis of nucleoside triphosphates other than ATP. The ATP gamma phosphate is transferred to the NDP beta phosphate via a ping-pong mechanism, using a phosphorylated active-site intermediate. The polypeptide is Nucleoside diphosphate kinase (Staphylothermus marinus (strain ATCC 43588 / DSM 3639 / JCM 9404 / F1)).